A 1020-amino-acid polypeptide reads, in one-letter code: Protein translocase subunit SecA (1020 aa).

Residues Q99, 117–121 (GEGKT), and D633 each bind ATP. The tract at residues 963–992 (NEQPSQEMAADEETQEESKIEENKPEPIVV) is disordered. Over residues 978-987 (EESKIEENKP) the composition is skewed to basic and acidic residues. The Zn(2+) site is built by C1002, C1004, C1013, and C1014.

The protein belongs to the SecA family. As to quaternary structure, monomer and homodimer. Part of the essential Sec protein translocation apparatus which comprises SecA, SecYEG and auxiliary proteins SecDF. Other proteins may also be involved. Zn(2+) serves as cofactor.

It localises to the cell inner membrane. Its subcellular location is the cytoplasm. It carries out the reaction ATP + H2O + cellular proteinSide 1 = ADP + phosphate + cellular proteinSide 2.. Part of the Sec protein translocase complex. Interacts with the SecYEG preprotein conducting channel. Has a central role in coupling the hydrolysis of ATP to the transfer of proteins into and across the cell membrane, serving as an ATP-driven molecular motor driving the stepwise translocation of polypeptide chains across the membrane. In Protochlamydia amoebophila (strain UWE25), this protein is Protein translocase subunit SecA.